The following is a 224-amino-acid chain: Dickkopf-related protein 4 (224 aa).

Positions 1–18 are cleaved as a signal peptide; sequence MVAAVLLGLSWLCSPLGA. Residues 41–90 are DKK-type Cys-1; sequence CLSDTDCNTRKFCLQPRDEKPFCATCRGLRRRCQRDAMCCPGTLCVNDVC. Positions 109-139 are disordered; that stretch reads GTHAEGTTGHPVQENQPKRKPSIKKSQGRKG. Positions 126–136 are enriched in basic residues; sequence KRKPSIKKSQG. Disulfide bonds link Cys-145-Cys-157, Cys-151-Cys-166, Cys-156-Cys-194, Cys-176-Cys-202, and Cys-196-Cys-218. The DKK-type Cys-2 stretch occupies residues 145-218; sequence CLRTFDCGPG…NRQHARLRVC (74 aa).

Belongs to the dickkopf family. Interacts with LRP5 and LRP6. Post-translationally, appears to be not glycosylated. Can be proteolytically processed by a furin-like protease. Expressed in cerebellum, T-cells, esophagus and lung.

It is found in the secreted. Antagonizes canonical Wnt signaling by inhibiting LRP5/6 interaction with Wnt and by forming a ternary complex with the transmembrane protein KREMEN that promotes internalization of LRP5/6. DKKs play an important role in vertebrate development, where they locally inhibit Wnt regulated processes such as antero-posterior axial patterning, limb development, somitogenesis and eye formation. In the adult, Dkks are implicated in bone formation and bone disease, cancer and Alzheimer disease. This Homo sapiens (Human) protein is Dickkopf-related protein 4 (DKK4).